The sequence spans 324 residues: NADH-quinone oxidoreductase subunit H (324 aa).

8 consecutive transmembrane segments (helical) span residues 11–31, 81–101, 114–134, 154–174, 186–206, 237–257, 265–285, and 304–324; these read ILITVGKAVVILLVVVTCGAF, VIFTLAPMIAFTSMLIAFAIV, IGILFFLMMAGLAVYAVLFAG, VSYEVFIGLSLMGVVAQAGSF, LWNVIPQFFGFITFAIAGVAV, FFVGEYIGIVTVSALMVTLFF, LPPFVWFALKTGFFMMMFILI, and VCLPITLLNLLATAAVILYNA.

This sequence belongs to the complex I subunit 1 family. NDH-1 is composed of 13 different subunits. Subunits NuoA, H, J, K, L, M, N constitute the membrane sector of the complex.

It is found in the cell inner membrane. The enzyme catalyses a quinone + NADH + 5 H(+)(in) = a quinol + NAD(+) + 4 H(+)(out). NDH-1 shuttles electrons from NADH, via FMN and iron-sulfur (Fe-S) centers, to quinones in the respiratory chain. The immediate electron acceptor for the enzyme in this species is believed to be ubiquinone. Couples the redox reaction to proton translocation (for every two electrons transferred, four hydrogen ions are translocated across the cytoplasmic membrane), and thus conserves the redox energy in a proton gradient. This subunit may bind ubiquinone. This chain is NADH-quinone oxidoreductase subunit H, found in Pectobacterium atrosepticum (strain SCRI 1043 / ATCC BAA-672) (Erwinia carotovora subsp. atroseptica).